The chain runs to 306 residues: Protein YIPF1 (306 aa).

At 1–119 (MAAVDDLQFE…VRLYIRSNPD (119 aa)) the chain is on the cytoplasmic side. Residues 33 to 59 (PSVSFKHQPRPPGSLGREEDEELLGTN) are disordered. Over residues 50–59 (EEDEELLGTN) the composition is skewed to acidic residues. Residues 120–140 (LYGPFWICATLVFAIAISGNL) form a helical membrane-spanning segment. The Lumenal segment spans residues 141-162 (SNFLIHLGEKTYHYVPEFQKVS). The helical transmembrane segment at 163 to 183 (IAATVIYAYAWLVPLALWGFL) threads the bilayer. At 184–200 (LWRNSKVMNIVSYSFLE) the chain is on the cytoplasmic side. The chain crosses the membrane as a helical span at residues 201–221 (IVCVYGYSLFIYIPTAVLWII). Residues 222–227 (PQRVIR) lie on the Lumenal side of the membrane. A helical transmembrane segment spans residues 228 to 248 (WVLVTIALGISGSVLAMTFWP). Residues 249–256 (AVREDNRR) lie on the Cytoplasmic side of the membrane. A helical transmembrane segment spans residues 257-277 (VALATIVTIMLLHVLLSVGCL). Over 278–306 (AYFFDAPEMDHLPAAITTPNQTVAAAKSS) the chain is Lumenal. The N-linked (GlcNAc...) asparagine glycan is linked to Asn-297.

The protein belongs to the YIP1 family. As to quaternary structure, interacts with YIPF6; this interaction may stabilize YIPF1. May also form a ternary complex with YIPF2 and YIPF6.

The protein resides in the golgi apparatus. The protein localises to the cis-Golgi network membrane. It is found in the trans-Golgi network membrane. It localises to the late endosome membrane. In Rattus norvegicus (Rat), this protein is Protein YIPF1 (Yipf1).